A 423-amino-acid chain; its full sequence is MDIDQYMTDVGRRARRASRSIARASTAAKNAALEAVARAIERDAGALKAANARDVARAKDKGLDAAFVDRLTLSDKALKTMVEGLRQVATLPDPIGEMSNLKYRPSGIQVGQMRVPLGVIGIIYESRPNVTIDAAALCLKSGNATILRGGSEALESNTALAKLIGEGLAEAGLPQDTVQVVETADRAAVGRLITMTEYVDVIVPRGGKSLIERLINEARVPMIKHLDGICHVYVDDRASVTKALTVCDNAKTHRYGTCNTMETLLVARGIAPAVLSPLGRLYREKGVELRVDADARAVLEAAGVGPLVDATDEDWRTEYLAPVLAIKIVDGIDAAIEHINEYGSHHTDAIVTEDHDRAMRFLREVDSASVMVNASTRFADGFEFGLGAEIGISNDKLHARGPVGLEGLTSLKYVVLGHGEGRQ.

Belongs to the gamma-glutamyl phosphate reductase family.

The protein resides in the cytoplasm. It carries out the reaction L-glutamate 5-semialdehyde + phosphate + NADP(+) = L-glutamyl 5-phosphate + NADPH + H(+). The protein operates within amino-acid biosynthesis; L-proline biosynthesis; L-glutamate 5-semialdehyde from L-glutamate: step 2/2. Functionally, catalyzes the NADPH-dependent reduction of L-glutamate 5-phosphate into L-glutamate 5-semialdehyde and phosphate. The product spontaneously undergoes cyclization to form 1-pyrroline-5-carboxylate. In Burkholderia thailandensis (strain ATCC 700388 / DSM 13276 / CCUG 48851 / CIP 106301 / E264), this protein is Gamma-glutamyl phosphate reductase.